The primary structure comprises 500 residues: Cysteine--tRNA ligase (500 aa).

C30 is a binding site for Zn(2+). The 'HIGH' region motif lies at 32-42; that stretch reads PTVYDYAHIGN. Zn(2+) contacts are provided by C224, H263, and E267. The 'KMSKS' region motif lies at 296–300; it reads KMSKS. ATP is bound at residue K299.

This sequence belongs to the class-I aminoacyl-tRNA synthetase family. In terms of assembly, monomer. Zn(2+) is required as a cofactor.

Its subcellular location is the cytoplasm. It carries out the reaction tRNA(Cys) + L-cysteine + ATP = L-cysteinyl-tRNA(Cys) + AMP + diphosphate. This Bartonella bacilliformis (strain ATCC 35685 / KC583 / Herrer 020/F12,63) protein is Cysteine--tRNA ligase.